A 498-amino-acid polypeptide reads, in one-letter code: MRINPTTSGPGVSTLEKKNLGRISQIIGPVLDVAFPPGKMPNIYNALVVKGRDTIGQEINVTCEVQQLLGNNRVRAVAMSATDGLMRGMEVIDTGAPLSVPVGGATLGRIFNVLGEPVDDLGPVDTRTTSPIHRSAPAFIQLDTKLSIFETGIKVVDLLAPYRRGGKIGLFGGAGVGKTVLIMELINNIAKAHGGVSVFGGVGERTREGNDLYMEMKESGVINEQNIAESKVALVYGQMNEPPGARMRVGLTALTMAEYFRDVNEQDVLLFIDNIFRFVQAGSEVSALLGRMPSAVGYQPTLSTEMGTLQERITSTKEGSITSIQAVYVPADDLTDPAPATTFAHLDATTVLSRGLAAKGIYPAVDPLDSTSTMLQPRIVGEEHYETAQRVKQTLQRYKELQDIIAILGLDELSEEDRLTVARARKIERFLSQPFFVAEVFTGSPGKYVGLAETIRGFKLILSGELDGLPEQAFYLVGNIDEATAKATNLEMESKLKK.

172–179 serves as a coordination point for ATP; the sequence is GGAGVGKT.

Belongs to the ATPase alpha/beta chains family. In terms of assembly, F-type ATPases have 2 components, CF(1) - the catalytic core - and CF(0) - the membrane proton channel. CF(1) has five subunits: alpha(3), beta(3), gamma(1), delta(1), epsilon(1). CF(0) has four main subunits: a(1), b(1), b'(1) and c(9-12).

Its subcellular location is the plastid. It is found in the chloroplast thylakoid membrane. The enzyme catalyses ATP + H2O + 4 H(+)(in) = ADP + phosphate + 5 H(+)(out). Its function is as follows. Produces ATP from ADP in the presence of a proton gradient across the membrane. The catalytic sites are hosted primarily by the beta subunits. In Eucalyptus globulus subsp. globulus (Tasmanian blue gum), this protein is ATP synthase subunit beta, chloroplastic.